The following is an 85-amino-acid chain: Toxin BmKa3 (85 aa).

Positions 1–19 (MNYLVFFSLALLLMTGVES) are cleaved as a signal peptide. The LCN-type CS-alpha/beta domain occupies 21–83 (RDGYIADDKN…VPIRVPGKCN (63 aa)). Cystine bridges form between Cys-31–Cys-82, Cys-35–Cys-55, Cys-41–Cys-65, and Cys-45–Cys-67.

It belongs to the long (4 C-C) scorpion toxin superfamily. Sodium channel inhibitor family. Alpha subfamily. As to expression, expressed by the venom gland.

The protein localises to the secreted. Its function is as follows. Alpha toxins bind voltage-independently at site-3 of sodium channels (Nav) and inhibit the inactivation of the activated channels, thereby blocking neuronal transmission. In Olivierus martensii (Manchurian scorpion), this protein is Toxin BmKa3.